A 320-amino-acid chain; its full sequence is Ferrochelatase (320 aa).

Fe cation-binding residues include histidine 194 and glutamate 275.

The protein belongs to the ferrochelatase family. As to quaternary structure, monomer.

The protein resides in the cytoplasm. The enzyme catalyses heme b + 2 H(+) = protoporphyrin IX + Fe(2+). The protein operates within porphyrin-containing compound metabolism; protoheme biosynthesis; protoheme from protoporphyrin-IX: step 1/1. Catalyzes the ferrous insertion into protoporphyrin IX. The polypeptide is Ferrochelatase (Salmonella schwarzengrund (strain CVM19633)).